We begin with the raw amino-acid sequence, 414 residues long: Protein MAK11 (414 aa).

Ser-2 carries the post-translational modification N-acetylserine. WD repeat units lie at residues 50 to 78 (AHSL…RIYD), 90 to 135 (SHQG…MVWR), 147 to 177 (GHTA…RLWN), 189 to 221 (LRKY…LIYE), 238 to 267 (LMHI…HFYP), and 298 to 330 (GHTN…VVWD). Phosphoserine is present on residues Ser-376 and Ser-380. Phosphothreonine is present on Thr-382.

Associates with 60S pre-ribosomal particles.

Its subcellular location is the nucleus. The protein resides in the nucleolus. The protein localises to the nucleus membrane. Its function is as follows. Essential for cell growth. Plays a role in assembly of 60S pre-ribosomal particles in the nucleolus. Also required for replication of the M1 double-stranded RNA of the L-A virus. This latter function may reflect an enhanced requirement for free 60S ribosomal particles for the translation of viral mRNAs which lack poly-A tails. This chain is Protein MAK11 (MAK11), found in Saccharomyces cerevisiae (strain ATCC 204508 / S288c) (Baker's yeast).